Here is a 302-residue protein sequence, read N- to C-terminus: GLABROUS1 enhancer-binding protein (302 aa).

2 disordered regions span residues 1–55 (MVTP…MKKK) and 158–229 (GQGD…NDDD). Serine 27 is modified (phosphoserine). Basic and acidic residues predominate over residues 180–195 (RTNESGEEMLKEHEEE). A compositionally biased stretch (polar residues) spans 208–217 (AKTTENGTSS). Residues 270-291 (LSDEWKALCVEETRFNIKKLRF) are non-canonical leucine-zipper.

Belongs to the GeBP family. As to quaternary structure, homo- and heterodimers. Interacts with GPL1, GPL2 and GPL3. Interacts with KIN10, KIN11 and FLZ4. Interacts with KIN10 and KIN11 via its N-terminal part. Interacts with GPL1 and GPL3 via its C-terminal part. In terms of tissue distribution, expressed in the apical meristem and young leaf primordia. Not detected in emerging or mature leaves. Detected in the vascular tissues of cotyledons and leaves, in hydathodes and at the base of flowers and siliques, but not in roots.

Its subcellular location is the nucleus. The protein localises to the nucleolus. In terms of biological role, DNA-binding protein, which specifically recognizes the GL1 enhancer sequence. May be involved in leaf initiation. May play redundant roles with GPL1 and GPL2 in cytokinin responses by regulating the transcript levels of type-A ARR response genes. Involved in stress responses. Plays a repressive role in cell expansion by counteracting the positive role of CPR5 in this process, but does not regulate cell proliferation or endoreduplication. May play a role in plant defense. The chain is GLABROUS1 enhancer-binding protein from Arabidopsis thaliana (Mouse-ear cress).